A 215-amino-acid chain; its full sequence is Guanylate kinase (215 aa).

The Guanylate kinase-like domain occupies 6–185 (GAILVLSGPS…SEKLLLSIAR (180 aa)). 13–20 (GPSGSGKS) serves as a coordination point for ATP.

The protein belongs to the guanylate kinase family.

The protein resides in the cytoplasm. The enzyme catalyses GMP + ATP = GDP + ADP. In terms of biological role, essential for recycling GMP and indirectly, cGMP. In Wolinella succinogenes (strain ATCC 29543 / DSM 1740 / CCUG 13145 / JCM 31913 / LMG 7466 / NCTC 11488 / FDC 602W) (Vibrio succinogenes), this protein is Guanylate kinase.